Consider the following 213-residue polypeptide: Large ribosomal subunit protein uL1 (213 aa).

Belongs to the universal ribosomal protein uL1 family. As to quaternary structure, part of the 50S ribosomal subunit.

Functionally, binds directly to 23S rRNA. Probably involved in E site tRNA release. In terms of biological role, protein L1 is also a translational repressor protein, it controls the translation of its operon by binding to its mRNA. This chain is Large ribosomal subunit protein uL1, found in Methanosarcina barkeri (strain Fusaro / DSM 804).